Reading from the N-terminus, the 213-residue chain is NDR1/HIN1-like protein 26 (213 aa).

Over 1 to 27 (MSQISITSPKHCAKKGGININNRHKKL) the chain is Cytoplasmic. A helical membrane pass occupies residues 28 to 48 (FFTFSTFFSGLLLIIFLVWLI). Residues 49–213 (LHPERPEFSL…LQGTRCSTTI (165 aa)) lie on the Lumenal side of the membrane. N67, N77, and N195 each carry an N-linked (GlcNAc...) asparagine glycan.

Expressed in the vasculature of roots, rosette leaves, stems, cauline leaves and flowers. Specifically expressed in phloem.

It is found in the cell junction. The protein resides in the plasmodesma. Its subcellular location is the endoplasmic reticulum membrane. Its function is as follows. Involved in the regulation of sugar, amino acid and some primary metabolite export from companion cells (CCs) to sieve elements (SEs) in phloem. Required for apoplastic phloem sugar loading in source leaves in order to transport it to sink tissues. Required for correct sugar partitioning between source leaves and sink organs. In Arabidopsis thaliana (Mouse-ear cress), this protein is NDR1/HIN1-like protein 26.